The sequence spans 660 residues: MALLGIKLMTLVFAAWLSCCHSSSALPSSGLSGPCLNHSCLLRNSLNGASQWGTILHSPAVGSNCPPCPMMSIMGCSPPKPLQSNSYGVLCSTIASKAKQDLKLCWKEVQTRSEMYSKRISAALIDSLHQAVGMLLMIIIWIWSSIFLVVYHVLAYMTTYHLSSAVCVGFLIFCTICAFRLISWICGDLLAFNVSGLTPIWVNFSESSCPAGLSLRRYKNEKTVEGYKPFIIPQKSPKKSVIELSFSNGSHLGYATCVRLWDGSICLMTAKHCLVKEALLKGRVAGHSLPVKNFDLFLTCDEIDFSLLRGPKQWEAYLGVKGADLITSNRIGRSPVTFYNLSKDGEWLANSAQITGRHGKLCSVLSNTSPGDSGTPYYSGKNVVGIHKGTSELENYNLMIPIPNIPGLTSPDFKFETTNVRGNLYNDEGFRLSVGEDDKAEHWTDRLMKSITFKTKRWADWAEEESESDDERGKVVPPAKPSNYGEGCPPEHNQYLSDVGDLLTKVIGPEQNEKCVDILMGIMGVDKNEVAPHKEEKAEKGNEAVVSATVKTVKEPTTQCDEDIISEIVKRVVDKMNLKAIEKSVVEILAEKAMTKAPRGKRKNSKDTSRPSTPGSYIIPAKRTPDSGPVEKSLNSTGRAKEESPSGARTLPGNIPAWVR.

The signal sequence occupies residues 1 to 25 (MALLGIKLMTLVFAAWLSCCHSSSA). Helical transmembrane passes span 131–151 (AVGM…LVVY) and 165–185 (AVCV…ISWI). Positions 224 to 416 (VEGYKPFIIP…GLTSPDFKFE (193 aa)) constitute a Peptidase S39 domain. Catalysis depends on for protease activity residues His272, Asp304, and Ser373. Disordered regions lie at residues 463–490 (EEES…GCPP) and 595–660 (TKAP…AWVR).

The protein belongs to the peptidase S39B family.

The protein localises to the host membrane. In terms of biological role, precursor from which the VPg molecule is probably released at the onset of the RNA synthesis. Essential for virus replication. The chain is Genome-linked protein precursor from Euphorbia pulcherrima (Poinsettia).